The following is a 572-amino-acid chain: Probable D-xylulose kinase A (572 aa).

Substrate is bound by residues H95, R166, D282, and N283. Residues W365, G470–G471, and N474 contribute to the ATP site.

This sequence belongs to the FGGY kinase family.

Its subcellular location is the cytoplasm. The enzyme catalyses D-xylulose + ATP = D-xylulose 5-phosphate + ADP + H(+). Functionally, highly specific D-xylulose kinase which participates in the catabolism of xylose. Xylose is a major component of hemicelluloses such as xylan. Most fungi utilize D-xylose via three enzymatic reactions, xylose reductase (XR), xylitol dehydrogenase (XDH), and xylulokinase, to form xylulose 5-phosphate, which enters pentose phosphate pathway. This Aspergillus flavus (strain ATCC 200026 / FGSC A1120 / IAM 13836 / NRRL 3357 / JCM 12722 / SRRC 167) protein is Probable D-xylulose kinase A (xkiA).